Consider the following 364-residue polypeptide: DNA polymerase IV (364 aa).

The UmuC domain maps to 6-194 (VFHIDFDYFY…LKIRDIPGIG (189 aa)). Asp10 and Asp111 together coordinate Mg(2+). Glu112 is an active-site residue.

The protein belongs to the DNA polymerase type-Y family. In terms of assembly, monomer. Mg(2+) is required as a cofactor.

The protein localises to the cytoplasm. It catalyses the reaction DNA(n) + a 2'-deoxyribonucleoside 5'-triphosphate = DNA(n+1) + diphosphate. Poorly processive, error-prone DNA polymerase involved in untargeted mutagenesis. Copies undamaged DNA at stalled replication forks, which arise in vivo from mismatched or misaligned primer ends. These misaligned primers can be extended by PolIV. Exhibits no 3'-5' exonuclease (proofreading) activity. May be involved in translesional synthesis. The sequence is that of DNA polymerase IV from Nitrosopumilus maritimus (strain SCM1).